A 444-amino-acid chain; its full sequence is 23S rRNA (uracil(1939)-C(5))-methyltransferase RlmD (444 aa).

The region spanning 11–70 (NSIKNHILKNIKVEKLDHRGRGLAYFQNKPLFIDGALAGELLEVQIVESKKRYSKGKIKK) is the TRAM domain. [4Fe-4S] cluster-binding residues include Cys83, Cys89, Cys92, and Cys171. Residues Gln277, Phe306, Asn311, Glu327, Asp354, and Asp376 each coordinate S-adenosyl-L-methionine. Catalysis depends on Cys402, which acts as the Nucleophile.

This sequence belongs to the class I-like SAM-binding methyltransferase superfamily. RNA M5U methyltransferase family. RlmD subfamily.

The enzyme catalyses uridine(1939) in 23S rRNA + S-adenosyl-L-methionine = 5-methyluridine(1939) in 23S rRNA + S-adenosyl-L-homocysteine + H(+). Its function is as follows. Catalyzes the formation of 5-methyl-uridine at position 1939 (m5U1939) in 23S rRNA. In Psychromonas ingrahamii (strain DSM 17664 / CCUG 51855 / 37), this protein is 23S rRNA (uracil(1939)-C(5))-methyltransferase RlmD.